The primary structure comprises 900 residues: 3'-5' exonuclease DinG (900 aa).

An Exonuclease domain is found at 8–161; sequence VVDLETTGNQ…DEDATTTALL (154 aa). Residues 241 to 496 enclose the Helicase ATP-binding domain; the sequence is SEVVKSLNLT…KAIDKLEQQR (256 aa). 276-283 contacts ATP; it reads APLGSGKS. The short motif at 448–451 is the DEAH box element; that stretch reads DEAH. Positions 713–893 constitute a Helicase C-terminal domain; sequence DYIQEYVTIT…QFSKLVNKIQ (181 aa).

The protein belongs to the helicase family. DinG subfamily. Type 2 sub-subfamily.

Its function is as follows. 3'-5' exonuclease. This Staphylococcus haemolyticus (strain JCSC1435) protein is 3'-5' exonuclease DinG.